The sequence spans 342 residues: Methionine import ATP-binding protein MetN 3 (342 aa).

The 240-residue stretch at 2–241 (ISLKGISKTF…PKEQMTKEFV (240 aa)) folds into the ABC transporter domain. An ATP-binding site is contributed by 38–45 (GYSGAGKS).

This sequence belongs to the ABC transporter superfamily. Methionine importer (TC 3.A.1.24) family. In terms of assembly, the complex is composed of two ATP-binding proteins (MetN), two transmembrane proteins (MetI) and a solute-binding protein (MetQ).

Its subcellular location is the cell membrane. The catalysed reaction is L-methionine(out) + ATP + H2O = L-methionine(in) + ADP + phosphate + H(+). The enzyme catalyses D-methionine(out) + ATP + H2O = D-methionine(in) + ADP + phosphate + H(+). Functionally, part of the ABC transporter complex MetNIQ involved in methionine import. Responsible for energy coupling to the transport system. The sequence is that of Methionine import ATP-binding protein MetN 3 from Shouchella clausii (strain KSM-K16) (Alkalihalobacillus clausii).